The chain runs to 358 residues: Uroporphyrinogen decarboxylase (358 aa).

Substrate is bound by residues 29–33, Phe48, Asp79, Tyr155, Ser210, and His330; that span reads RQAGR.

The protein belongs to the uroporphyrinogen decarboxylase family. As to quaternary structure, homodimer.

Its subcellular location is the cytoplasm. The catalysed reaction is uroporphyrinogen III + 4 H(+) = coproporphyrinogen III + 4 CO2. The protein operates within porphyrin-containing compound metabolism; protoporphyrin-IX biosynthesis; coproporphyrinogen-III from 5-aminolevulinate: step 4/4. Catalyzes the decarboxylation of four acetate groups of uroporphyrinogen-III to yield coproporphyrinogen-III. This is Uroporphyrinogen decarboxylase from Bordetella pertussis (strain Tohama I / ATCC BAA-589 / NCTC 13251).